The sequence spans 313 residues: Ribosomal RNA small subunit methyltransferase H (313 aa).

S-adenosyl-L-methionine is bound by residues 35–37 (GGH), D55, F79, D101, and Q108.

It belongs to the methyltransferase superfamily. RsmH family.

It localises to the cytoplasm. The catalysed reaction is cytidine(1402) in 16S rRNA + S-adenosyl-L-methionine = N(4)-methylcytidine(1402) in 16S rRNA + S-adenosyl-L-homocysteine + H(+). In terms of biological role, specifically methylates the N4 position of cytidine in position 1402 (C1402) of 16S rRNA. This Musicola paradisiaca (strain Ech703) (Dickeya paradisiaca) protein is Ribosomal RNA small subunit methyltransferase H.